The chain runs to 400 residues: Phosphoglycerate kinase (400 aa).

Residues 21–23, R36, 59–62, R119, and R160 contribute to the substrate site; these read DFN and HLGR. Residues K211, E329, and 356–359 each bind ATP; that span reads GGDS.

The protein belongs to the phosphoglycerate kinase family. In terms of assembly, monomer.

Its subcellular location is the cytoplasm. It carries out the reaction (2R)-3-phosphoglycerate + ATP = (2R)-3-phospho-glyceroyl phosphate + ADP. Its pathway is carbohydrate degradation; glycolysis; pyruvate from D-glyceraldehyde 3-phosphate: step 2/5. This Levilactobacillus brevis (strain ATCC 367 / BCRC 12310 / CIP 105137 / JCM 1170 / LMG 11437 / NCIMB 947 / NCTC 947) (Lactobacillus brevis) protein is Phosphoglycerate kinase.